We begin with the raw amino-acid sequence, 621 residues long: MALMQIAEPGTAADPHQRRLAIGIDLGTTHSLVASVLSAVPTVMRDHDGKYLLPSVVRYLGGGGIHVGYPAVAAAGQDPHNTIASAKRLMGRGHGDVQTLAGHLPYDLVPGEGMVRLRTVAGEKSPVEVSAEILRVLKERAVETLGGEPEGAVITVPAYFDEAQRQATKDAARLAGLNVLRLLAEPTAAAVAYGLDKGSEGIFAIYDLGGGTFDISILRLQAGVFEVLATAGDSALGGDDMDHALAEWLMQEEGGDASDPLWRRQVLQQARTAKEALSAVAETMIVLTPSGRAAREIKLSRGRLESLIQPVIQRSLPACRRALRDAGLKLDEIEGVVLVGGATRVPAVRAMVEEFFRQKPLTDIDPDQVVAIGAAIQADALVGNQREDLLLMDVLPLSLGLETMGGLVEKIIPRNTPIPVARAQEFTTFKDGQTAMSIHVVQGERDLVQDCRSLARFSLRGIPPMVAGAARIRVTFQVDADGLLAVRAEETSTGVRSEVVVKPSYGLNDEEIARMLQDSFIHGAEDVVRRRLSEAKVEGERVREALRTALAADADLLDPAEREALDKAGTALTNALSGDDAGVITAAAEAVETAAEPLVQRRMDSALRRAITGRSIDELGD.

Belongs to the heat shock protein 70 family.

Its function is as follows. Chaperone involved in the maturation of iron-sulfur cluster-containing proteins. Has a low intrinsic ATPase activity which is markedly stimulated by HscB. The polypeptide is Chaperone protein HscA homolog (Acidithiobacillus ferrooxidans (strain ATCC 23270 / DSM 14882 / CIP 104768 / NCIMB 8455) (Ferrobacillus ferrooxidans (strain ATCC 23270))).